The primary structure comprises 429 residues: Histidine--tRNA ligase (429 aa).

It belongs to the class-II aminoacyl-tRNA synthetase family. Homodimer.

Its subcellular location is the cytoplasm. The enzyme catalyses tRNA(His) + L-histidine + ATP = L-histidyl-tRNA(His) + AMP + diphosphate + H(+). This is Histidine--tRNA ligase from Oceanobacillus iheyensis (strain DSM 14371 / CIP 107618 / JCM 11309 / KCTC 3954 / HTE831).